Reading from the N-terminus, the 105-residue chain is Histone H2A-like 1 (105 aa).

Belongs to the histone H2A family. In terms of assembly, the nucleosome is a histone octamer containing two molecules each of H2A, H2B, H3 and H4 assembled in one H3-H4 heterotetramer and two H2A-H2B heterodimers. May be incorporated into a proportion of nucleosomes, replacing one or more H2A molecules. Interacts with H2BC1/TH2B; preferentially dimerizes with H2BC1/TH2B to form nucleosomes. Testis-specific.

Its subcellular location is the nucleus. The protein resides in the chromosome. Functionally, atypical histone H2A which can replace conventional H2A in some nucleosomes and may play a role during spermatogenesis. Nucleosomes wrap and compact DNA into chromatin, limiting DNA accessibility to the cellular machineries which require DNA as a template. Histones thereby play a central role in transcription regulation, DNA repair, DNA replication and chromosomal stability. DNA accessibility is regulated via a complex set of post-translational modifications of histones, also called histone code, and nucleosome remodeling. This Mus musculus (Mouse) protein is Histone H2A-like 1.